The sequence spans 195 residues: dCTP deaminase (195 aa).

DCTP contacts are provided by residues 105–110 (RSSLGR), D123, 131–133 (TLE), Q152, Y166, K173, and Q177. E133 serves as the catalytic Proton donor/acceptor. A disordered region spans residues 159–195 (KSPAERPYGAERGSKYQGQTGPQASRIQGDREFGGDQ). A compositionally biased stretch (basic and acidic residues) spans 160–172 (SPAERPYGAERGS). Residues 174 to 184 (YQGQTGPQASR) show a composition bias toward polar residues. A compositionally biased stretch (basic and acidic residues) spans 186–195 (QGDREFGGDQ).

This sequence belongs to the dCTP deaminase family. As to quaternary structure, homotrimer.

It catalyses the reaction dCTP + H2O + H(+) = dUTP + NH4(+). Its pathway is pyrimidine metabolism; dUMP biosynthesis; dUMP from dCTP (dUTP route): step 1/2. In terms of biological role, catalyzes the deamination of dCTP to dUTP. The chain is dCTP deaminase from Natronomonas pharaonis (strain ATCC 35678 / DSM 2160 / CIP 103997 / JCM 8858 / NBRC 14720 / NCIMB 2260 / Gabara) (Halobacterium pharaonis).